The following is a 1944-amino-acid chain: MENDEAFDRLIRKIQENQKHPSFEGSNKVLHLALSYLNTNRQNPHWVCDPKLQVAVRECLFLFSFQNDNEYLVWFKKHLNERLQLCPKCIVKYHQSLDDFKSLCLNIFHFDPNTLEIVMEKIYSWDIFRLQEVLKTVPKIDTSSASKPILCAFYEILYSPRILHNKEIFPLFRNRFLESGFLRLSKNLVPGVISLLFSRDDELRRWACSILSDVKTISDNEFKILEGPLLQEIRSLDQKKENENEMQIFLKGLSLLLKHVDHLYFRGLTGKNFNVADFILSGLQSDHTNLCPSFLVCLHSLLYCYGRNFWTPEISPSEVIDKIFNGNAYKRWTEENTSNFSNDQKAENPFEWATSLLKTISIIDEVELINKILINYTMQYKKELEVGFKNVQLLQSLADIFSVLFSEYFMIFPHSDQSLQNKVFELHSTLAIKFDELFRLLNLENEESVEWRLIKKVFEYRLNLDLYILKQFYCHYLDRNRKPPLNIKSVSESFKNFWVYLQNVFREEKFFMVRIVFRACSTVCLIDKLPPKKVDIPFKSDFENALNGFVATFSEMLIQTQCWHLSAQTQLVSNPLTFRGIFSLVFSPILEISTGSISIIKSISLSDSVVDTIGELLRSQFSNTLNSSCYVLLQWLKVRNFGGAKHIVYFNKLIINTIFDSVDGLTSKDATFAKQVEKKESLKNFWESLWKFFTHFFIVLPTWPVHDKDNLVDLMRDTLDFCDMLINIFEEVNGFIFGLSDNDIKIVSANDKGSALAMCIADSLVTVSYWLKLTDSSLLTSVVKVICKMLKICKKLECPISQNVIDIIHRASITSDEQTILTFTEREDLFISLTPYLSEDVLNHSPFNDTNTLETKLQSDDRGLLSKDQTIGIAKKLPESNISTSNHFLLPPKAISASKAINRNAQKSQNLNFLKSKQETTQRIRESAKVPRTSAGNHLSEKLNSDNHIPKALQKLDSADPIRKPSLLHTSKSYSNPDDKNTSTSDEDTSESEEESSNGLFSLAREANSHASKSLPQRRQIQFLDFDSLKTKNVVHPTQLRRNTQQSAQLARLRLNPDVQEFYKVILGWNPLADSFSASNVEMQCVQAKFTYNDSNAYEKVFKPMLFHECWAQVKSAVEEKQYPPIDLILNTRSTVDNFVDIYFTSCSPTEVSFLSDTDICLLSKSQSSGDTNNPKSFQLCKIQSISRKKESLELCLRMNIESIDLQEYAPNIRFTAQKLFNATTSLREFAALKSLRHLPLSQRILDANVTRLPSNFTDDKKQKIMKSYGVNEPQAYAIYASSVNDGFTLIQGPPGTGKTKTILGMIGAVLTSSSQGLQFNVPGQTRKTSKNKILICAPSNAAIDEILLRIKAGVYDHEGIKFFPKVIRVGFGDSISVHAKEFTLEEQMIKQMELTNLKKDQEANNSSDTRKKYDSIIKKRDSLREDLEKFRSTGKNSSILEAQLREITKQKNMLEQSLDDMRERQRSTNRNLDVLKKQIQNQLLQEADIVCATLSASGHELLLNAGLTFRTVIIDEAAQAVELSSIIPLKYGCESCVMVGDPNQLPPTVLSKTSAKFGYSQSLYVRMFKQHNESACLLSIQYRMNPEISRFPSKFFYNSKLLDGPNMSAVTSRPWHEDPQLGIYRFFNVHGTEAFSNSKSLYNVEEASFILLLYERLIQCYLNIDFEGKIGVVTPYRSQVQQLRSQFQRKYGSIIFKHLDIHTVDGFQGQEKDIIIFSCVRSSMSGGIGFLQDLRRLNVALTRAKSSLYIVGNSKPLMQEDIFYSLIEDAKTRGVWRDLSANQFKNSKSISNVSTHLASNNLNLASRDTPIKSPSVGICEEKQEAHKVKKRHNIDSANLSRGTERDEDIPNKRAKNKVSTDQTAADNKVTKPRLDESSSSKQDVLNKIDESEIEQASSKKPGYVEKNKDKGHMKKSKKPKSKLALAAMAHGFAPPKVEHFKRK.

The segment at 908–999 is disordered; it reads SQNLNFLKSK…SESEEESSNG (92 aa). 2 stretches are compositionally biased toward basic and acidic residues: residues 916–929 and 939–949; these read SKQE…ESAK and LSEKLNSDNHI. Residues 985 to 996 show a composition bias toward acidic residues; that stretch reads SDEDTSESEEES. 1293–1300 contacts ATP; that stretch reads GPPGTGKT. The disordered stretch occupies residues 1824-1944; that stretch reads QEAHKVKKRH…PPKVEHFKRK (121 aa). Basic and acidic residues-rich tracts occupy residues 1843–1852 and 1869–1891; these read GTERDEDIPN and KVTK…KIDE. Basic residues predominate over residues 1912–1922; sequence GHMKKSKKPKS.

Belongs to the DNA2/NAM7 helicase family.

Its subcellular location is the nucleus. This is an uncharacterized protein from Schizosaccharomyces pombe (strain 972 / ATCC 24843) (Fission yeast).